The chain runs to 217 residues: MQHEFWHQRWQENRIGFHQFTPSPLLVDYFNELGLKTSARIFVPLSGKTLDISWLLQQGYHVVAIELSQIAVTSLIEQLVEDFDIQFESSEKNNLIHYHHPQIDIFVGDFFDLSKEQLGQVDAIFDRAALIALPDDIRQDYVQHLIEISGAASQFLISYQYDAGSHEGPPFSVNAEEIKQLYAEAYDIRLLKEQLVDASQNKGNHPKSTLWILTAKF.

S-adenosyl-L-methionine is bound by residues Trp-10, Leu-45, Glu-66, and Arg-127.

It belongs to the class I-like SAM-binding methyltransferase superfamily. TPMT family.

It localises to the cytoplasm. The enzyme catalyses S-adenosyl-L-methionine + a thiopurine = S-adenosyl-L-homocysteine + a thiopurine S-methylether.. In Acinetobacter baylyi (strain ATCC 33305 / BD413 / ADP1), this protein is Thiopurine S-methyltransferase.